The following is a 717-amino-acid chain: Fatty acid oxidation complex subunit alpha (717 aa).

The segment at 1 to 190 (MIHAGNAITV…KDGAVDAVVS (190 aa)) is enoyl-CoA hydratase/isomerase. Position 298 (Asp-298) interacts with substrate. The interval 313–717 (HPVNQAAVLG…MAENNKKFYG (405 aa)) is 3-hydroxyacyl-CoA dehydrogenase. Residues Met-326, Asp-345, 402–404 (VTE), Lys-409, and Ser-431 contribute to the NAD(+) site. Catalysis depends on His-452, which acts as the For 3-hydroxyacyl-CoA dehydrogenase activity. Asn-455 is a binding site for NAD(+). A substrate-binding site is contributed by Asn-502.

In the N-terminal section; belongs to the enoyl-CoA hydratase/isomerase family. It in the C-terminal section; belongs to the 3-hydroxyacyl-CoA dehydrogenase family. In terms of assembly, heterotetramer of two alpha chains (FadB) and two beta chains (FadA).

It carries out the reaction a (3S)-3-hydroxyacyl-CoA + NAD(+) = a 3-oxoacyl-CoA + NADH + H(+). The catalysed reaction is a (3S)-3-hydroxyacyl-CoA = a (2E)-enoyl-CoA + H2O. It catalyses the reaction a 4-saturated-(3S)-3-hydroxyacyl-CoA = a (3E)-enoyl-CoA + H2O. The enzyme catalyses (3S)-3-hydroxybutanoyl-CoA = (3R)-3-hydroxybutanoyl-CoA. It carries out the reaction a (3Z)-enoyl-CoA = a 4-saturated (2E)-enoyl-CoA. The catalysed reaction is a (3E)-enoyl-CoA = a 4-saturated (2E)-enoyl-CoA. Its pathway is lipid metabolism; fatty acid beta-oxidation. Involved in the aerobic and anaerobic degradation of long-chain fatty acids via beta-oxidation cycle. Catalyzes the formation of 3-oxoacyl-CoA from enoyl-CoA via L-3-hydroxyacyl-CoA. It can also use D-3-hydroxyacyl-CoA and cis-3-enoyl-CoA as substrate. The polypeptide is Fatty acid oxidation complex subunit alpha (Acinetobacter baylyi (strain ATCC 33305 / BD413 / ADP1)).